We begin with the raw amino-acid sequence, 397 residues long: Citrate synthase (397 aa).

Active-site residues include histidine 266 and aspartate 320.

This sequence belongs to the citrate synthase family.

It catalyses the reaction oxaloacetate + acetyl-CoA + H2O = citrate + CoA + H(+). The protein operates within carbohydrate metabolism; tricarboxylic acid cycle; isocitrate from oxaloacetate: step 1/2. This Synechocystis sp. (strain ATCC 27184 / PCC 6803 / Kazusa) protein is Citrate synthase (gltA).